Here is a 271-residue protein sequence, read N- to C-terminus: 3-deoxy-manno-octulosonate cytidylyltransferase (271 aa).

This sequence belongs to the KdsB family.

It localises to the cytoplasm. It catalyses the reaction 3-deoxy-alpha-D-manno-oct-2-ulosonate + CTP = CMP-3-deoxy-beta-D-manno-octulosonate + diphosphate. Its pathway is nucleotide-sugar biosynthesis; CMP-3-deoxy-D-manno-octulosonate biosynthesis; CMP-3-deoxy-D-manno-octulosonate from 3-deoxy-D-manno-octulosonate and CTP: step 1/1. It functions in the pathway bacterial outer membrane biogenesis; lipopolysaccharide biosynthesis. Activates KDO (a required 8-carbon sugar) for incorporation into bacterial lipopolysaccharide in Gram-negative bacteria. The polypeptide is 3-deoxy-manno-octulosonate cytidylyltransferase (Leptothrix cholodnii (strain ATCC 51168 / LMG 8142 / SP-6) (Leptothrix discophora (strain SP-6))).